The sequence spans 90 residues: MNVVPSRPEVSRGSPKSPLREHVAQVVRRYLRDLDGCDANDLYNMVLREMEIPLLVEVLNHCEGNQSRAAALLGIHRATLRKKLKEYGLV.

Positions 66–85 form a DNA-binding region, H-T-H motif; it reads QSRAAALLGIHRATLRKKLK.

It belongs to the transcriptional regulatory Fis family.

This is Putative Fis-like DNA-binding protein from Xylella fastidiosa (strain Temecula1 / ATCC 700964).